Here is a 272-residue protein sequence, read N- to C-terminus: Shikimate dehydrogenase (NADP(+)) (272 aa).

Residues 14-16 (SRS) and T61 contribute to the shikimate site. The Proton acceptor role is filled by K65. Residue E77 coordinates NADP(+). The shikimate site is built by N86 and D102. NADP(+) is bound by residues 126-130 (GVGGA), 149-154 (NRTFPR), and M213. Y215 serves as a coordination point for shikimate. G237 provides a ligand contact to NADP(+).

Belongs to the shikimate dehydrogenase family. In terms of assembly, homodimer.

It catalyses the reaction shikimate + NADP(+) = 3-dehydroshikimate + NADPH + H(+). It participates in metabolic intermediate biosynthesis; chorismate biosynthesis; chorismate from D-erythrose 4-phosphate and phosphoenolpyruvate: step 4/7. Its function is as follows. Involved in the biosynthesis of the chorismate, which leads to the biosynthesis of aromatic amino acids. Catalyzes the reversible NADPH linked reduction of 3-dehydroshikimate (DHSA) to yield shikimate (SA). This Sodalis glossinidius (strain morsitans) protein is Shikimate dehydrogenase (NADP(+)).